Reading from the N-terminus, the 295-residue chain is MFYIQSSEALQILKNSLRKHLPESLKVYGTVFHMNQGNPFKLKAVVDKWPDFNTVVIRPQEQDMTDDLDHYNNTYLIYSKDPKHCQEFLGSSDVINWKQHLQIQSSQADLGKVIENLGATNLGKVKHKQCFLYMVSHTAKKLTPSLVDAKHLVVSSEKPTPFDHQLFKFARLDVKHAALVNSIWYFGGNEKSQKFIERCIFTFPSVCIMGPEGTPVSWALMDHTGELRMAGTLPKYRHQNLIYHVAFHQVHTLEKLGFPMYLHVDKVNLTIQRMSAVLGHVPMPCTWNQWNWVPL.

K41 carries the N6-acetyllysine; alternate modification. Residue K41 is modified to N6-succinyllysine; alternate. K43 is modified (N6-acetyllysine). The residue at position 48 (K48) is an N6-acetyllysine; alternate. Residue K48 is modified to N6-succinyllysine; alternate. N6-acetyllysine is present on residues K80 and K83. N6-acetyllysine; alternate is present on residues K124, K128, and K140. N6-succinyllysine; alternate is present on residues K124, K128, and K140. An N6-acetyllysine modification is found at K150. K255 carries the N6-acetyllysine; alternate modification. The residue at position 255 (K255) is an N6-succinyllysine; alternate.

It belongs to the glycine N-acyltransferase family. In terms of assembly, binds to microtubules. In terms of tissue distribution, specifically expressed in kidney and liver. Up-regulated in the regenerating liver as well as in hepatocellular carcinoma.

The protein localises to the cytoplasm. Its subcellular location is the cytoskeleton. The protein resides in the microtubule organizing center. It localises to the centrosome. It carries out the reaction an acyl-CoA + glycine = an N-acylglycine + CoA + H(+). Its function is as follows. Acyltransferase which transfers the acyl group to the N-terminus of glycine. Can conjugate a multitude of substrates to form a variety of N-acylglycines. The chain is Glycine N-acyltransferase-like protein Keg1 (Keg1) from Rattus norvegicus (Rat).